Consider the following 149-residue polypeptide: Large ribosomal subunit protein bL9 (149 aa).

The protein belongs to the bacterial ribosomal protein bL9 family.

Binds to the 23S rRNA. This chain is Large ribosomal subunit protein bL9, found in Klebsiella pneumoniae subsp. pneumoniae (strain ATCC 700721 / MGH 78578).